The chain runs to 355 residues: Sesquiterpene synthase-like protein Agr11 (355 aa).

The protein belongs to the terpene synthase family.

The chain is Sesquiterpene synthase-like protein Agr11 from Cyclocybe aegerita (Black poplar mushroom).